The chain runs to 106 residues: Pyrimidine/purine nucleoside phosphorylase (106 aa).

Belongs to the nucleoside phosphorylase PpnP family.

The catalysed reaction is a purine D-ribonucleoside + phosphate = a purine nucleobase + alpha-D-ribose 1-phosphate. It catalyses the reaction adenosine + phosphate = alpha-D-ribose 1-phosphate + adenine. It carries out the reaction cytidine + phosphate = cytosine + alpha-D-ribose 1-phosphate. The enzyme catalyses guanosine + phosphate = alpha-D-ribose 1-phosphate + guanine. The catalysed reaction is inosine + phosphate = alpha-D-ribose 1-phosphate + hypoxanthine. It catalyses the reaction thymidine + phosphate = 2-deoxy-alpha-D-ribose 1-phosphate + thymine. It carries out the reaction uridine + phosphate = alpha-D-ribose 1-phosphate + uracil. The enzyme catalyses xanthosine + phosphate = alpha-D-ribose 1-phosphate + xanthine. Functionally, catalyzes the phosphorolysis of diverse nucleosides, yielding D-ribose 1-phosphate and the respective free bases. Can use uridine, adenosine, guanosine, cytidine, thymidine, inosine and xanthosine as substrates. Also catalyzes the reverse reactions. The chain is Pyrimidine/purine nucleoside phosphorylase from Burkholderia multivorans (strain ATCC 17616 / 249).